Consider the following 381-residue polypeptide: Beta-lactamase CMY-4 (381 aa).

An N-terminal signal peptide occupies residues 1–20 (MMKKSLCCALLLTASFSTFA). Serine 84 functions as the Acyl-ester intermediate in the catalytic mechanism. Positions 84, 140, 170, and 172 each coordinate a beta-lactam.

The protein belongs to the class-C beta-lactamase family.

It catalyses the reaction a beta-lactam + H2O = a substituted beta-amino acid. Class C beta-lactamase which confers resistance to penicillins and cephalosporins. This Klebsiella pneumoniae protein is Beta-lactamase CMY-4.